The chain runs to 284 residues: MPNRRRRKLSTAMSAVAALAVASPCAYFLVYESTETTERPEHHEFKQAAVLTDLPGELMSALSQGLSQFGINIPPVPSLTGSGDASTGLTGPGLTSPGLTSPGLTSPGLTDPALTSPGLTPTLPGSLAAPGTTLAPTPGVGANPALTNPALTSPTGATPGLTSPTGLDPALGGANEIPITTPVGLDPGADGTYPILGDPTLGTIPSSPATTSTGGGGLVNDVMQVANELGASQAIDLLKGVLMPSIMQAVQNGGAAAPAASPPVPPIPAAAAVPPTDPITVPVA.

The first 22 residues, 1-22 (MPNRRRRKLSTAMSAVAALAVA), serve as a signal peptide directing secretion. Topologically, residues 23–252 (SPCAYFLVYE…MPSIMQAVQN (230 aa)) are extracellular. The interval 80–216 (TGSGDASTGL…SPATTSTGGG (137 aa)) is disordered. Positions 86 to 110 (STGLTGPGLTSPGLTSPGLTSPGLT) are enriched in low complexity. A run of 12 repeats spans residues 92–96 (PGLTS), 97–101 (PGLTS), 102–106 (PGLTS), 107–111 (PGLTD), 112–116 (PALTS), 117–121 (PGLTP), 144–148 (PALTN), 149–153 (PALTS), 154–158 (PTGAT), 159–163 (PGLTS), 164–168 (PTGLD), and 169–173 (PALGG). The 6 X 5 AA tandem repeats of P-[GA]-L-T-S stretch occupies residues 92–121 (PGLTSPGLTSPGLTSPGLTDPALTSPGLTP). A 6 X 5 AA approximate tandem repeats of P-[ATG]-[LG]-X-X region spans residues 144 to 173 (PALTNPALTSPTGATPGLTSPTGLDPALGG). Over residues 145–165 (ALTNPALTSPTGATPGLTSPT) the composition is skewed to polar residues. Residues 202–212 (GTIPSSPATTS) are compositionally biased toward low complexity. Residues 253 to 273 (GGAAAPAASPPVPPIPAAAAV) traverse the membrane as a helical segment. The Cytoplasmic portion of the chain corresponds to 274–284 (PPTDPITVPVA).

This sequence to M.leprae 28 kDa antigen.

Its subcellular location is the cell membrane. In terms of biological role, surface-exposed protein required for multiplication and intracellular growth. This Mycobacterium bovis (strain ATCC BAA-935 / AF2122/97) protein is Exported repetitive protein (erp).